The chain runs to 686 residues: Antigen peptide transporter 2 (686 aa).

Topologically, residues 1-6 (MRLPDL) are lumenal. A helical transmembrane segment spans residues 7–27 (RPWTSLLLVDAALLWLLQGPL). Residues 28-56 (GTLLPQGLPGLWLEGTLRLGGLWGLLKLR) are Cytoplasmic-facing. A helical transmembrane segment spans residues 57–77 (GLLGFVGTLLLPLCLATPLTV). Topologically, residues 78 to 98 (SLRALVAGASRAPPARVASAP) are lumenal. Residues 99–119 (WSWLLVGYGAAGLSWSLWAVL) form a helical membrane-spanning segment. Residues 120–148 (SPPGAQEKEQDQVNNKVLMWRLLKLSRPD) lie on the Cytoplasmic side of the membrane. Residues 149-169 (LPLLVAAFFFLVLAVLGETLI) form a helical membrane-spanning segment. Positions 152 to 435 (LVAAFFFLVL…LVYIYGDMLS (284 aa)) constitute an ABC transmembrane type-1 domain. At 170 to 187 (PHYSGRVIDILGGDFDPH) the chain is on the lumenal side. The chain crosses the membrane as a helical span at residues 188 to 208 (AFASAIFFMCLFSFGSSLSAG). Residues 209–266 (CRGGCFTYTMSRINLRIREQLFSSLLRQDLGFFQETKTGELNSRLSSDTTLMSNWLPL) lie on the Cytoplasmic side of the membrane. Residues 267–287 (NANVLLRSLVKVVGLYGFMLS) form a helical membrane-spanning segment. Topologically, residues 288 to 293 (ISPRLT) are lumenal. The helical transmembrane segment at 294 to 314 (LLSLLHMPFTIAAEKVYNTRH) threads the bilayer. Positions 301–389 (PFTIAAEKVY…RRVLHLGVQM (89 aa)) are part of the peptide-binding site. Topologically, residues 315–374 (QEVLREIQDAVARAGQVVREAVGGLQTVRSFGAEEHEVCRYKEALEQCRQLYWRRDLERA) are cytoplasmic. Residues 375–395 (LYLLVRRVLHLGVQMLMLSCG) traverse the membrane as a helical segment. Over 396–408 (LQQMQDGELTQGS) the chain is Lumenal. The chain crosses the membrane as a helical span at residues 409-429 (LLSFMIYQESVGSYVQTLVYI). Positions 414 to 433 (IYQESVGSYVQTLVYIYGDM) are part of the peptide-binding site. Topologically, residues 430–686 (YGDMLSNVGA…EGKLQKLAQL (257 aa)) are cytoplasmic. The ABC transporter domain maps to 468–686 (VKFQDVSFAY…EGKLQKLAQL (219 aa)). Position 503–510 (503–510 (GPNGSGKS)) interacts with ATP.

This sequence belongs to the ABC transporter superfamily. ABCB family. MHC peptide exporter (TC 3.A.1.209) subfamily. As to quaternary structure, heterodimer of TAP1 and TAP2 (TAP1-TAP2). A component of the peptide loading complex (PLC), interacts via TAPBP with MHCI heterodimer; this interaction mediates peptide-MHCI assembly. Recruits TAPBP in a 1:1 stoichiometry. Interacts with classical MHCI such as HLA-A*02-B2M; this interaction is obligatory for the loading of peptide epitopes. Interacts with non-classical MHCI molecules including HLA-E-B2M and HLA-F-B2M as well as PLC component CALR before the peptide loading. (Microbial infection) Interacts with Epstein-Barr virus BLNF2a. In terms of assembly, (Microbial infection) Interacts with herpes simplex virus US12/ICP47. As to quaternary structure, (Microbial infection) Interacts with adenovirus E3-19K glycoprotein, which binds TAP1-TAP2 and acts as a TAPBP inhibitor, preventing TAP1-TAP2 association with MHCI. It depends on Mg(2+) as a cofactor.

The protein localises to the endoplasmic reticulum membrane. The enzyme catalyses a peptide antigen(in) + ATP + H2O = a peptide antigen(out) + ADP + phosphate + H(+). With respect to regulation, inhibited at high ER lumenal peptide concentrations. (Microbial infection) Inhibited by herpes simplex virus US12/ICP47 protein, which blocks the peptide-binding site of TAP1-TAP2. Its activity is regulated as follows. (Microbial infection) Inhibited by human cytomegalovirus US6 glycoprotein, which binds to the lumenal side of TAP1-TAP2 complex and inhibits peptide translocation by specifically blocking ATP-binding and preventing TAP1-TAP2 conformational rearrangement induced by peptide binding. Its function is as follows. ABC transporter associated with antigen processing. In complex with TAP1 mediates unidirectional translocation of peptide antigens from cytosol to endoplasmic reticulum (ER) for loading onto MHC class I (MHCI) molecules. Uses the chemical energy of ATP to export peptides against the concentration gradient. During the transport cycle alternates between 'inward-facing' state with peptide binding site facing the cytosol to 'outward-facing' state with peptide binding site facing the ER lumen. Peptide antigen binding to ATP-loaded TAP1-TAP2 induces a switch to hydrolysis-competent 'outward-facing' conformation ready for peptide loading onto nascent MHCI molecules. Subsequently ATP hydrolysis resets the transporter to the 'inward facing' state for a new cycle. Typically transports intracellular peptide antigens of 8 to 13 amino acids that arise from cytosolic proteolysis via IFNG-induced immunoproteasome. Binds peptides with free N- and C-termini, the first three and the C-terminal residues being critical. Preferentially selects peptides having a highly hydrophobic residue at position 3 and hydrophobic or charged residues at the C-terminal anchor. Proline at position 2 has the most destabilizing effect. As a component of the peptide loading complex (PLC), acts as a molecular scaffold essential for peptide-MHCI assembly and antigen presentation. The protein is Antigen peptide transporter 2 of Homo sapiens (Human).